Reading from the N-terminus, the 387-residue chain is 3-ketoacyl-CoA thiolase (387 aa).

Residue cysteine 91 is the Acyl-thioester intermediate of the active site. Active-site proton acceptor residues include histidine 343 and cysteine 373.

The protein belongs to the thiolase-like superfamily. Thiolase family. In terms of assembly, heterotetramer of two alpha chains (FadB) and two beta chains (FadA).

Its subcellular location is the cytoplasm. The catalysed reaction is an acyl-CoA + acetyl-CoA = a 3-oxoacyl-CoA + CoA. It functions in the pathway lipid metabolism; fatty acid beta-oxidation. Functionally, catalyzes the final step of fatty acid oxidation in which acetyl-CoA is released and the CoA ester of a fatty acid two carbons shorter is formed. The polypeptide is 3-ketoacyl-CoA thiolase (Shewanella baltica (strain OS185)).